A 236-amino-acid chain; its full sequence is GCN5-related N-acetyltransferase 8 (236 aa).

An N-acetyltransferase domain is found at Ala96 to Asn235. Acetyl-CoA contacts are provided by residues Ile161 to Val163, Arg169 to Ser174, Asn200 to Asn202, and Tyr207. Catalysis depends on Tyr207, which acts as the Proton donor.

Belongs to the acetyltransferase family. GNAT subfamily. Oligomer. Expressed throughout the plant.

Its subcellular location is the cytoplasm. It is found in the nucleus. It carries out the reaction an N-terminal L-alpha-aminoacyl-[protein] + acetyl-CoA = N-terminal N(alpha)-acetyl-L-alpha-aminoacyl-[protein] + CoA + H(+). The catalysed reaction is L-lysyl-[protein] + acetyl-CoA = N(6)-acetyl-L-lysyl-[protein] + CoA + H(+). Its function is as follows. Probable protein acetyltransferase with dual specificity triggering both N-alpha-acetylation (NTA) and epsilon-lysine acetylation (KA). This chain is GCN5-related N-acetyltransferase 8, found in Arabidopsis thaliana (Mouse-ear cress).